A 304-amino-acid polypeptide reads, in one-letter code: Phosphoribosylaminoimidazole-succinocarboxamide synthase (304 aa).

This sequence belongs to the SAICAR synthetase family.

It carries out the reaction 5-amino-1-(5-phospho-D-ribosyl)imidazole-4-carboxylate + L-aspartate + ATP = (2S)-2-[5-amino-1-(5-phospho-beta-D-ribosyl)imidazole-4-carboxamido]succinate + ADP + phosphate + 2 H(+). The protein operates within purine metabolism; IMP biosynthesis via de novo pathway; 5-amino-1-(5-phospho-D-ribosyl)imidazole-4-carboxamide from 5-amino-1-(5-phospho-D-ribosyl)imidazole-4-carboxylate: step 1/2. The protein is Phosphoribosylaminoimidazole-succinocarboxamide synthase of Corynebacterium efficiens (strain DSM 44549 / YS-314 / AJ 12310 / JCM 11189 / NBRC 100395).